Here is a 442-residue protein sequence, read N- to C-terminus: MDRWQDIKQVVVVGLGITGLSVVRHLRKTQPQLQVKVIDTRPTPPGVEQLPPDIALHVGSWNEAWLAEADLVVTNPGIALATPQIQTVLARGVAVVGDIELFAWAADKPVIAITGSNGKSTVTDLTGVMANACGVKCAIGGNIGVPALDLLEQEVELYVLELSSFQLETTTSLHLVAAAFLNLSEDHMDRYQGMDDYRQAKLRIFQHAKHGVVNRDDRQTYPETSHGQQSLALVTFGSDDKEFGVMSHQGESWLSYNQQPILASRELKLVGQHNVANVLVVLALLTCAGIDYRKGLSALKSYTGLTHRCQVVADNRGIKWVNDSKATNLASTQAALSGLNCAGKLYLLVGGDGKGADFSPLKPILAQLNLQLCCFGADGDQFMPLHASATRFERMEDVIEHISPQLQSGDMVMLSPACASFDQFSNFMARGDRFAELARQYA.

115 to 121 (GSNGKST) provides a ligand contact to ATP.

This sequence belongs to the MurCDEF family.

It is found in the cytoplasm. It catalyses the reaction UDP-N-acetyl-alpha-D-muramoyl-L-alanine + D-glutamate + ATP = UDP-N-acetyl-alpha-D-muramoyl-L-alanyl-D-glutamate + ADP + phosphate + H(+). It functions in the pathway cell wall biogenesis; peptidoglycan biosynthesis. Functionally, cell wall formation. Catalyzes the addition of glutamate to the nucleotide precursor UDP-N-acetylmuramoyl-L-alanine (UMA). In Vibrio vulnificus (strain YJ016), this protein is UDP-N-acetylmuramoylalanine--D-glutamate ligase.